Consider the following 187-residue polypeptide: Signal peptidase complex catalytic subunit SEC11 (187 aa).

The Cytoplasmic segment spans residues 1 to 18 (MLSSLSPYMANPRNTLSQ). A helical; Signal-anchor for type II membrane protein membrane pass occupies residues 19–39 (VLNFGLVLSSAFMVWKALSVI). Over 40 to 187 (TNSASPVVVV…MGLMVMLQRE (148 aa)) the chain is Lumenal. Residues Ser-53 and His-92 each act as charge relay system in the active site. N-linked (GlcNAc...) asparagine glycosylation occurs at Asn-125. Residue Asp-129 is the Charge relay system of the active site. A C-terminal short (CTS) helix region spans residues 173–184 (VLLGFMGLMVML).

It belongs to the peptidase S26B family. In terms of assembly, component of the signal peptidase complex (SPC) composed of a catalytic subunit SEC11 and three accessory subunits SPC1, SPC2 and SPC3. The complex induces a local thinning of the ER membrane which is used to measure the length of the signal peptide (SP) h-region of protein substrates. This ensures the selectivity of the complex towards h-regions shorter than 18-20 amino acids. SPC associates with the translocon complex.

Its subcellular location is the endoplasmic reticulum membrane. The enzyme catalyses Cleavage of hydrophobic, N-terminal signal or leader sequences from secreted and periplasmic proteins.. In terms of biological role, catalytic component of the signal peptidase complex (SPC) which catalyzes the cleavage of N-terminal signal sequences from nascent proteins as they are translocated into the lumen of the endoplasmic reticulum. Specifically cleaves N-terminal signal peptides that contain a hydrophobic alpha-helix (h-region) shorter than 18-20 amino acids. The sequence is that of Signal peptidase complex catalytic subunit SEC11 (SEC11) from Ajellomyces capsulatus (strain G186AR / H82 / ATCC MYA-2454 / RMSCC 2432) (Darling's disease fungus).